The sequence spans 837 residues: Protein translocase subunit SecA (837 aa).

ATP-binding positions include Gln-83, 101–105 (GEGKT), and Asp-494.

It belongs to the SecA family. As to quaternary structure, monomer and homodimer. Part of the essential Sec protein translocation apparatus which comprises SecA, SecYEG and auxiliary proteins SecDF. Other proteins may also be involved.

The protein resides in the cell membrane. The protein localises to the cytoplasm. It carries out the reaction ATP + H2O + cellular proteinSide 1 = ADP + phosphate + cellular proteinSide 2.. Its function is as follows. Part of the Sec protein translocase complex. Interacts with the SecYEG preprotein conducting channel. Has a central role in coupling the hydrolysis of ATP to the transfer of proteins into and across the cell membrane, serving as an ATP-driven molecular motor driving the stepwise translocation of polypeptide chains across the membrane. The polypeptide is Protein translocase subunit SecA (Ureaplasma parvum serovar 3 (strain ATCC 27815 / 27 / NCTC 11736)).